Consider the following 3159-residue polypeptide: E1A-binding protein p400 (3159 aa).

The segment covering methionine 1–arginine 16 has biased composition (polar residues). Disordered stretches follow at residues methionine 1–serine 65, serine 125–alanine 154, proline 212–threonine 261, valine 282–proline 359, leucine 545–proline 594, glutamine 633–alanine 658, and threonine 684–threonine 770. Pro residues predominate over residues histidine 31–proline 41. Positions phenylalanine 42–serine 55 are enriched in low complexity. Serine 53 carries the post-translational modification Phosphoserine. The segment covering tyrosine 56–serine 65 has biased composition (polar residues). Composition is skewed to low complexity over residues serine 125–threonine 137 and leucine 237–proline 256. Serine 135 carries the phosphoserine modification. Phosphoserine is present on residues serine 315 and serine 321. Residues glutamine 558–glutamine 571 are compositionally biased toward low complexity. Positions tyrosine 572–serine 585 are enriched in polar residues. Pro residues-rich tracts occupy residues valine 637–glutamine 653 and aspartate 689–leucine 698. The span at proline 699 to glycine 711 shows a compositional bias: low complexity. 2 stretches are compositionally biased toward polar residues: residues asparagine 725–threonine 742 and threonine 751–alanine 760. Phosphoserine is present on residues serine 736 and serine 755. Residues threonine 761–threonine 770 show a composition bias toward low complexity. In terms of domain architecture, HSA spans leucine 799–alanine 871. 2 disordered regions span residues glutamate 915–aspartate 967 and serine 997–glutamate 1024. A phosphoserine mark is found at serine 928 and serine 941. A Phosphothreonine modification is found at threonine 945. 2 stretches are compositionally biased toward acidic residues: residues threonine 945–asparagine 962 and glutamate 1008–cysteine 1019. Residues aspartate 951–glutamine 1365 form an interactions with RUVBL1 and RUVBL2 region. Phosphoserine is present on serine 1011. The region spanning alanine 1103–glycine 1268 is the Helicase ATP-binding domain. Aspartate 1116–threonine 1123 contacts ATP. Residues aspartate 1219 to glutamine 1222 carry the DEAH box-like motif. Positions valine 1467–serine 1582 are disordered. Lysine 1472 is subject to N6-acetyllysine. Composition is skewed to low complexity over residues proline 1481–proline 1498 and proline 1538–proline 1565. A phosphoserine mark is found at serine 1547, serine 1728, and serine 1732. Residues glycine 1787–serine 1807 are disordered. Basic and acidic residues predominate over residues leucine 1789–glycine 1798. The region spanning lysine 1899–threonine 2056 is the Helicase C-terminal domain. 2 disordered regions span residues lysine 2119–glutamate 2144 and lysine 2287–valine 2311. Lysine 2349 and lysine 2356 each carry N6-acetyllysine. In terms of domain architecture, Myb-like spans glutamate 2360–isoleucine 2429. Disordered regions lie at residues lysine 2524–alanine 2602 and threonine 2665–alanine 2688. Positions lysine 2524–serine 2789 are interaction with ZNF42. Residues alanine 2530–valine 2540 show a composition bias toward low complexity. Pro residues-rich tracts occupy residues alanine 2541 to glutamine 2563 and proline 2572 to glutamine 2589. Positions proline 2590 to alanine 2602 are enriched in low complexity. Serine 2686 carries the phosphoserine modification. Threonine 2813 bears the Phosphothreonine mark. Disordered stretches follow at residues glutamine 2821 to arginine 2869 and alanine 3115 to glutamine 3159. The span at proline 2828–proline 2843 shows a compositional bias: pro residues. A compositionally biased stretch (low complexity) spans threonine 2844–threonine 2866. Positions proline 3129–lysine 3140 are enriched in polar residues.

It belongs to the SNF2/RAD54 helicase family. SWR1 subfamily. Component of the NuA4 histone acetyltransferase complex which contains the catalytic subunit KAT5/TIP60 and the subunits EP400, TRRAP/PAF400, BRD8/SMAP, EPC1, DMAP1/DNMAP1, RUVBL1/TIP49, RUVBL2, ING3, actin, ACTL6A/BAF53A, MORF4L1/MRG15, MORF4L2/MRGX, MRGBP, YEATS4/GAS41, VPS72/YL1 and MEAF6. May also participate in the formation of NuA4 related complexes which lack the KAT5/TIP60 catalytic subunit, but which include the SWI/SNF related protein SRCAP. The NuA4 complex interacts with MYC and the adenovirus E1A protein. EP400 interacts with TRRAP, RUVBL1 and RUVBL2. Component of a SWR1-like complex. Interacts with ZNF42. Interacts with PHF5A. Interacts with human cytomegalovirus UL27. Interacts with human adenovirus 5 E1A protein; this interaction stabilizes MYC. Ubiquitously expressed.

Its subcellular location is the nucleus. Component of the NuA4 histone acetyltransferase complex which is involved in transcriptional activation of select genes principally by acetylation of nucleosomal histones H4 and H2A. This modification may both alter nucleosome - DNA interactions and promote interaction of the modified histones with other proteins which positively regulate transcription. May be required for transcriptional activation of E2F1 and MYC target genes during cellular proliferation. The NuA4 complex ATPase and helicase activities seem to be, at least in part, contributed by the association of RUVBL1 and RUVBL2 with EP400. May regulate ZNF42 transcription activity. Component of a SWR1-like complex that specifically mediates the removal of histone H2A.Z/H2AZ1 from the nucleosome. This is E1A-binding protein p400 (EP400) from Homo sapiens (Human).